Reading from the N-terminus, the 674-residue chain is Enzymatic polyprotein (674 aa).

Positions 40-130 (IELHCFVDTG…CQLYEPFIQF (91 aa)) are protease. D47 is a catalytic residue. The 181-residue stretch at 267–447 (LKVIKPSKSP…KKINFLGLEI (181 aa)) folds into the Reverse transcriptase domain.

This sequence belongs to the caulimoviridae enzymatic polyprotein family.

The catalysed reaction is DNA(n) + a 2'-deoxyribonucleoside 5'-triphosphate = DNA(n+1) + diphosphate. Its function is as follows. Encodes for at least two polypeptides: protease (PR) and reverse transcriptase (RT). The protease processes the polyprotein in cis. Reverse transcriptase is multifunctional enzyme that converts the viral RNA genome into dsDNA in viral cytoplasmic capsids. This enzyme displays a DNA polymerase activity that can copy either DNA or RNA templates, and a ribonuclease H (RNase H) activity that cleaves the RNA strand of RNA-DNA heteroduplexes in a partially processive 3'- to 5'-endonucleasic mode. Neo-synthesized pregenomic RNA (pgRNA) are encapsidated, and reverse-transcribed inside the nucleocapsid. Partial (+)DNA is synthesized from the (-)DNA template and generates the relaxed circular DNA (RC-DNA) genome. After budding and infection, the RC-DNA migrates in the nucleus, and is converted into a plasmid-like covalently closed circular DNA (cccDNA). This Arabidopsis thaliana (Mouse-ear cress) protein is Enzymatic polyprotein.